A 321-amino-acid polypeptide reads, in one-letter code: Protein stand still (321 aa).

Coiled coils occupy residues 74 to 103 (KLHEMKVAALEERRDRIMKNRRFAKSRKKA) and 147 to 167 (KQEQEGATRKLEDSTSDKANL). A compositionally biased stretch (basic and acidic residues) spans 146–162 (HKQEQEGATRKLEDSTS). 2 disordered regions span residues 146-166 (HKQEQEGATRKLEDSTSDKAN) and 227-248 (QVPPVQGESKSSGSLASSMEDV). Over residues 235–244 (SKSSGSLASS) the composition is skewed to low complexity. Residues 272 to 292 (QRDVLQRLERSMAQISQELHC) are a coiled coil.

Germ cells specific. Expressed in all germ cells. During the first instar larvae, it is expressed in all germ cells of both sexes. In third instar larvae, it decreases in male germ cells while it remains in female germ cells. In adult ovary, it is expressed in cells of the germarium, including the stem cells. In the early previtellogenic stages, it is highly expressed in the nurse cells. During vitellogenesis, it is not translocated into the maturing egg. In testes, it is only expressed during some steps of male germline differentiation. At the apex testis, it is expressed at low level in stem cells and dividing spermatogonia, while in newly formed 16-cell cysts of primary spermatocytes, it is transiently but strongly expressed before vanishing during spermatocyte growth phase.

It localises to the nucleus. In terms of biological role, essential in the female germline for proper survival, sex determination and differentiation. Participates in the transcriptional activation of Otu. Does not regulate the expression of Ovo. This is Protein stand still (stil) from Drosophila melanogaster (Fruit fly).